We begin with the raw amino-acid sequence, 268 residues long: AN1-type zinc finger protein 1 (268 aa).

Position 2 is an N-acetylalanine (Ala2). 2 consecutive AN1-type zinc fingers follow at residues 4–52 (LDIG…VINE) and 58–106 (QHTS…IPKP). Residues Cys10, Cys15, Cys25, Cys28, Cys33, His36, His42, Cys44, Cys64, Cys69, Cys79, Cys82, Cys87, His90, His96, and Cys98 each contribute to the Zn(2+) site. Residues 160 to 260 (QTERIYFQVF…EYLNDEEQFC (101 aa)) are ubiquitin-like.

Associates with the 26S proteasome; this association occurs upon exposure to arsenite and is reduced in the presence of ATP. Interacts (via AN1-type 1 and 2 zinc fingers) with PSMD1; this interaction is increased upon arsenite treatment and occurs in an ATP-independent manner. Interacts with PSMC4. Interacts with PSMA1. Interacts (via its ubiquitin-like region) with VCP; this interaction occurs in an arsenite-dependent manner and is necessary for the recruitment of the ubiquitin-selective ATPase VCP to stress granules (SGs).

It is found in the cytoplasm. The protein resides in the stress granule. Plays a role in the regulation of cytoplasmic stress granules (SGs) turnover. SGs are dynamic and transient cytoplasmic ribonucleoprotein assemblies important for cellular protein homeostasis when protein production is suspended after acute exogenous stress. Associates with SGs and is involved in the efficient and specific arsenite-induced clearance process of SGs through the recruitment of the ubiquitin-selective ATPase VCP and the 26S proteasome. This process requires both complexes for efficient degradation of damaged ubiquitinated SG proteins during recovery from arsenite stress, and hence avoiding aberrant cytoplasmic SGs degradation via autophagy. This Homo sapiens (Human) protein is AN1-type zinc finger protein 1.